Reading from the N-terminus, the 41-residue chain is Mu-conotoxin pn4c (41 aa).

The propeptide occupies D1 to R24.

The protein belongs to the conotoxin M superfamily. Post-translationally, contains 3 disulfide bonds. They are not added, since framework IV presents two different connectivities (I-V, II-III, IV-VI and I-III, II-V, IV-VI). As to expression, expressed by the venom duct.

It localises to the secreted. Functionally, mu-conotoxins block voltage-gated sodium channels (Nav). Blocks reversibly sodium channels in molluskan neurons, but has no effect on sodium currents in bovine chromaffin cells or in rat brain synaptosomes. Induces paralysis in mollusks (C.retripictus). The sequence is that of Mu-conotoxin pn4c from Conus pennaceus (Feathered cone).